The sequence spans 228 residues: uncharacterized protein (228 aa).

An N-terminal signal peptide occupies residues 1-28 (MRKKRVITCVMAASLTLGSLLPAGYASA).

This is an uncharacterized protein from Bacillus subtilis (strain 168).